The sequence spans 250 residues: ATP synthase subunit a (250 aa).

Transmembrane regions (helical) follow at residues 31–51 (SAYM…GMAG), 85–105 (FFPL…IGII), 115–135 (LIVT…YGLY), 144–164 (LFVP…IEVI), 194–214 (FVGM…LPLG), and 217–237 (VAVT…FTIL).

This sequence belongs to the ATPase A chain family. In terms of assembly, F-type ATPases have 2 components, CF(1) - the catalytic core - and CF(0) - the membrane proton channel. CF(1) has five subunits: alpha(3), beta(3), gamma(1), delta(1), epsilon(1). CF(0) has four main subunits: a, b, b' and c.

It localises to the cell inner membrane. In terms of biological role, key component of the proton channel; it plays a direct role in the translocation of protons across the membrane. In Rhodopseudomonas palustris (strain BisB5), this protein is ATP synthase subunit a.